The chain runs to 555 residues: Inorganic phosphate transporter 1-11 (555 aa).

At 1-28 (MADADGGSNLAVLDALDSARTQMYHMKA) the chain is on the cytoplasmic side. The chain crosses the membrane as a helical span at residues 29–49 (IVIAGMGFFTDAYDLFCISTV). Residues 50–77 (SKLLGRLYYQPDGSTDSKPGALSKTANN) are Extracellular-facing. Residues 78 to 98 (MVIGVALVGTLMGQLVFGYFG) traverse the membrane as a helical segment. Residues 99–105 (DKLGRKR) lie on the Cytoplasmic side of the membrane. A helical transmembrane segment spans residues 106-126 (VYGVTLILMAACAIGSGLSFG). At 127-130 (SSRK) the chain is on the extracellular side. A helical membrane pass occupies residues 131 to 151 (AVIGTLCFFRFWLGFGIGGDY). Over 152 to 167 (PLSATIMSEYSNKKTR) the chain is Cytoplasmic. Residues 168–188 (GAFIAAVFAMQGVGIIFAGLV) form a helical membrane-spanning segment. Topologically, residues 189-216 (SMIVSSIFLTYNKAPSYKGNHDLSRQMP) are extracellular. A helical membrane pass occupies residues 217–237 (AADYVWRIVLMIGAFPALATF). Residues 238–298 (YWRMKMPETA…PLLSMEFARR (61 aa)) are Cytoplasmic-facing. The helical transmembrane segment at 299–319 (HGLHLIGTTTTWFLLDIAFYS) threads the bilayer. Residues 320 to 351 (QNLTQKDIFPAMGLISGAAEVNALTEMFQISK) lie on the Extracellular side of the membrane. Residues 352–372 (ASFLVALLGTFPGYWVTVALI) traverse the membrane as a helical segment. The Cytoplasmic portion of the chain corresponds to 373–377 (DKMGR). Residues 378–398 (YMIQLIGFFMMSMFMLAMGIL) form a helical membrane-spanning segment. Residues 399-408 (YDYLKTHHFL) lie on the Extracellular side of the membrane. The helical transmembrane segment at 409–436 (FGLLYALTFFFANFGPNSTTFVLPAELF) threads the bilayer. Over 437 to 442 (PTRVRS) the chain is Cytoplasmic. A helical membrane pass occupies residues 443-463 (TCHAISAAAGKAGAIVAAFGI). Topologically, residues 464–477 (QKLTYNSQVKSIKK) are extracellular. A helical transmembrane segment spans residues 478–498 (ALIILSITNMLGFFFTFLVPE). At 499 to 555 (TMGRSLEEISGEDGNTGAGGGGAPAAANAGVGVSASDVSRDEKFPASSTEWQTSMHA) the chain is on the cytoplasmic side. The segment at 506 to 555 (EISGEDGNTGAGGGGAPAAANAGVGVSASDVSRDEKFPASSTEWQTSMHA) is disordered. The span at 512–521 (GNTGAGGGGA) shows a compositional bias: gly residues. Residues 522–535 (PAAANAGVGVSASD) are compositionally biased toward low complexity. Residues 544-555 (ASSTEWQTSMHA) show a composition bias toward polar residues.

It belongs to the major facilitator superfamily. Phosphate:H(+) symporter (TC 2.A.1.9) family.

The protein localises to the membrane. In terms of biological role, symbiosis-specific regulated inorganic phosphate (Pi) transporter. Probably involved in symbiosis-mediated Pi uptake in roots colonized by myccorhizal fungi. The protein is Inorganic phosphate transporter 1-11 (PHT1-11) of Oryza sativa subsp. japonica (Rice).